The sequence spans 218 residues: Ribonuclease T (218 aa).

The 175-residue stretch at 20 to 194 (VVIDVETAGF…YDAERTAELF (175 aa)) folds into the Exonuclease domain. 4 residues coordinate Mg(2+): aspartate 23, glutamate 25, histidine 181, and aspartate 186. Histidine 181 acts as the Proton donor/acceptor in catalysis.

It belongs to the RNase T family. As to quaternary structure, homodimer. It depends on Mg(2+) as a cofactor.

In terms of biological role, trims short 3' overhangs of a variety of RNA species, leaving a one or two nucleotide 3' overhang. Responsible for the end-turnover of tRNA: specifically removes the terminal AMP residue from uncharged tRNA (tRNA-C-C-A). Also appears to be involved in tRNA biosynthesis. This is Ribonuclease T from Baumannia cicadellinicola subsp. Homalodisca coagulata.